Reading from the N-terminus, the 260-residue chain is Cytochrome c oxidase subunit 2 (260 aa).

The Mitochondrial intermembrane portion of the chain corresponds to 1 to 41 (MIVREWLFFTMAPCDAAEPWQLGFQDAATPMMQGIIDLHHD). A helical membrane pass occupies residues 42-58 (IFFFLILILVFVSWILV). The Mitochondrial matrix segment spans residues 59-82 (RALWHFHYKKNPIPQRIVHGTTIE). A helical transmembrane segment spans residues 83 to 104 (IIRTIFPSIILMFIAIPSFALL). The Mitochondrial intermembrane segment spans residues 105 to 260 (YSMDEVVVDP…NQLIPQTGEA (156 aa)). Residues histidine 187, cysteine 222, glutamate 224, cysteine 226, histidine 230, and methionine 233 each contribute to the Cu cation site. Glutamate 224 contributes to the Mg(2+) binding site.

This sequence belongs to the cytochrome c oxidase subunit 2 family. As to quaternary structure, component of the cytochrome c oxidase (complex IV, CIV), a multisubunit enzyme composed of a catalytic core of 3 subunits and several supernumerary subunits. The complex exists as a monomer or a dimer and forms supercomplexes (SCs) in the inner mitochondrial membrane with ubiquinol-cytochrome c oxidoreductase (cytochrome b-c1 complex, complex III, CIII). It depends on Cu cation as a cofactor.

The protein localises to the mitochondrion inner membrane. It carries out the reaction 4 Fe(II)-[cytochrome c] + O2 + 8 H(+)(in) = 4 Fe(III)-[cytochrome c] + 2 H2O + 4 H(+)(out). Functionally, component of the cytochrome c oxidase, the last enzyme in the mitochondrial electron transport chain which drives oxidative phosphorylation. The respiratory chain contains 3 multisubunit complexes succinate dehydrogenase (complex II, CII), ubiquinol-cytochrome c oxidoreductase (cytochrome b-c1 complex, complex III, CIII) and cytochrome c oxidase (complex IV, CIV), that cooperate to transfer electrons derived from NADH and succinate to molecular oxygen, creating an electrochemical gradient over the inner membrane that drives transmembrane transport and the ATP synthase. Cytochrome c oxidase is the component of the respiratory chain that catalyzes the reduction of oxygen to water. Electrons originating from reduced cytochrome c in the intermembrane space (IMS) are transferred via the dinuclear copper A center (CU(A)) of subunit 2 and heme A of subunit 1 to the active site in subunit 1, a binuclear center (BNC) formed by heme A3 and copper B (CU(B)). The BNC reduces molecular oxygen to 2 water molecules using 4 electrons from cytochrome c in the IMS and 4 protons from the mitochondrial matrix. The polypeptide is Cytochrome c oxidase subunit 2 (COX2) (Beta vulgaris (Sugar beet)).